Reading from the N-terminus, the 138-residue chain is Large ribosomal subunit protein uL13 (138 aa).

It belongs to the universal ribosomal protein uL13 family. In terms of assembly, part of the 50S ribosomal subunit.

Its function is as follows. This protein is one of the early assembly proteins of the 50S ribosomal subunit, although it is not seen to bind rRNA by itself. It is important during the early stages of 50S assembly. The chain is Large ribosomal subunit protein uL13 from Picrophilus torridus (strain ATCC 700027 / DSM 9790 / JCM 10055 / NBRC 100828 / KAW 2/3).